The chain runs to 278 residues: N-terminal Xaa-Pro-Lys N-methyltransferase 2 (278 aa).

Residues G123, R128, D145, 174 to 175, Q190, and H195 each bind S-adenosyl-L-methionine; that span reads LQ.

The protein belongs to the methyltransferase superfamily. NTM1 family.

It localises to the nucleus. It catalyses the reaction N-terminal L-alanyl-L-prolyl-L-lysyl-[protein] + S-adenosyl-L-methionine = N-terminal N-methyl-L-alanyl-L-prolyl-L-lysyl-[protein] + S-adenosyl-L-homocysteine + H(+). The catalysed reaction is N-terminal L-prolyl-L-prolyl-L-lysyl-[protein] + S-adenosyl-L-methionine = N-terminal N-methyl-L-prolyl-L-prolyl-L-lysyl-[protein] + S-adenosyl-L-homocysteine + H(+). The enzyme catalyses N-terminal L-seryl-L-prolyl-L-lysyl-[protein] + S-adenosyl-L-methionine = N-terminal N-methyl-L-seryl-L-prolyl-L-lysyl-[protein] + S-adenosyl-L-homocysteine + H(+). Functionally, alpha N-methyltransferase that methylates the N-terminus of target proteins containing the N-terminal motif [Ala/Pro/Ser]-Pro-Lys when the initiator Met is cleaved. Specifically catalyzes monomethylation of exposed alpha-amino group of Ala or Ser residue in the [Ala/Ser]-Pro-Lys motif and Pro in the Pro-Pro-Lys motif. Predominantly functions as a mono-methyltransferase but is also able to di-/tri-methylate the GPKRIA peptide and di-methylate the PPKRIA peptide (in vitro). May activate NTMT1 by priming its substrates for trimethylation. This is N-terminal Xaa-Pro-Lys N-methyltransferase 2 (ntmt2) from Danio rerio (Zebrafish).